Reading from the N-terminus, the 175-residue chain is Shikimate kinase (175 aa).

14–19 (GAGKST) contacts ATP. Residue S18 participates in Mg(2+) binding. 3 residues coordinate substrate: D36, R60, and G82. Residue R120 coordinates ATP. R140 serves as a coordination point for substrate. Position 157 (Q157) interacts with ATP.

The protein belongs to the shikimate kinase family. In terms of assembly, monomer. It depends on Mg(2+) as a cofactor.

Its subcellular location is the cytoplasm. It catalyses the reaction shikimate + ATP = 3-phosphoshikimate + ADP + H(+). Its pathway is metabolic intermediate biosynthesis; chorismate biosynthesis; chorismate from D-erythrose 4-phosphate and phosphoenolpyruvate: step 5/7. Its function is as follows. Catalyzes the specific phosphorylation of the 3-hydroxyl group of shikimic acid using ATP as a cosubstrate. This Mannheimia succiniciproducens (strain KCTC 0769BP / MBEL55E) protein is Shikimate kinase.